Reading from the N-terminus, the 383-residue chain is Acetylornithine deacetylase (383 aa).

Residue His-80 participates in Zn(2+) binding. Residue Asp-82 is part of the active site. Asp-112 is a Zn(2+) binding site. Residue Glu-144 is part of the active site. Zn(2+) is bound by residues Glu-145, Glu-169, and His-355.

This sequence belongs to the peptidase M20A family. ArgE subfamily. Homodimer. Zn(2+) is required as a cofactor. Co(2+) serves as cofactor. Requires glutathione as cofactor.

It is found in the cytoplasm. The enzyme catalyses N(2)-acetyl-L-ornithine + H2O = L-ornithine + acetate. Its pathway is amino-acid biosynthesis; L-arginine biosynthesis; L-ornithine from N(2)-acetyl-L-ornithine (linear): step 1/1. Functionally, catalyzes the hydrolysis of the amide bond of N(2)-acetylated L-amino acids. Cleaves the acetyl group from N-acetyl-L-ornithine to form L-ornithine, an intermediate in L-arginine biosynthesis pathway, and a branchpoint in the synthesis of polyamines. This chain is Acetylornithine deacetylase, found in Escherichia coli O9:H4 (strain HS).